The following is a 256-amino-acid chain: Histone H1 (256 aa).

2 stretches are compositionally biased toward low complexity: residues 1–19 (MSDS…PPAT) and 27–43 (KKAS…ASAT). Disordered stretches follow at residues 1–53 (MSDS…QQMV) and 108–256 (GKGA…AAKK). A Phosphoserine modification is found at S11. Residues 45–119 (SHPPTQQMVD…GASGSFKLSA (75 aa)) enclose the H15 domain. Composition is skewed to basic and acidic residues over residues 121–140 (AKKE…EKKV) and 176–193 (KTAE…DAKK). Over residues 194–229 (TGIIKSKPAATKAKVTAAKPKAVVAKASKAKPAVSA) the composition is skewed to low complexity. Residues 245–256 (KKPKAKTTAAKK) show a composition bias toward basic residues.

This sequence belongs to the histone H1/H5 family. Post-translationally, phosphorylated in oocytes during prophase I of meiosis.

It is found in the nucleus. The protein resides in the chromosome. Its function is as follows. Histones H1 are necessary for the condensation of nucleosome chains into higher-order structures. In Drosophila melanogaster (Fruit fly), this protein is Histone H1 (His1).